An 82-amino-acid polypeptide reads, in one-letter code: U6 snRNA-associated Sm-like protein LSm6 (82 aa).

A Sm domain is found at 13-82 (DPSGFLSEII…GNNVMYISAD (70 aa)).

The protein belongs to the snRNP Sm proteins family. SmF/LSm6 subfamily. Component of the heptameric LSM1-LSM7 complex, which consists of snr-1/lsm1, snr-2/lsm2, snr-3/lsm3, snr-4/lsm4, snr-5/lsm5, snr-6/lsm6 and snr-7/lsm7. Component of the heptameric LSM2-LSM8 complex, which consists of snr-2/lsm2, snr-3/lsm3, snr-4/lsm4, snr-5/lsm5, snr-6/lsm6, snr-7/lsm7 and snr-8/lsm8. The LSm subunits form a seven-membered ring structure with a doughnut shape.

The protein localises to the cytoplasm. It localises to the nucleus. Functionally, component of LSm protein complexes, which are involved in RNA processing and may function in a chaperone-like manner, facilitating the efficient association of RNA processing factors with their substrates. Component of the cytoplasmic LSM1-LSM7 complex, which is thought to be involved in mRNA degradation by activating the decapping step in the 5'-to-3' mRNA decay pathway. Component of the nuclear LSM2-LSM8 complex, which is involved in splicing of nuclear mRNAs. LSM2-LSM8 associates with multiple snRNP complexes containing the U6 snRNA (U4/U6 di-snRNP, spliceosomal U4/U6.U5 tri-snRNP, and free U6 snRNP). It binds directly to the 3'-terminal U-tract of U6 snRNA and plays a role in the biogenesis and stability of the U6 snRNP and U4/U6 snRNP complexes. LSM2-LSM8 probably also is involved degradation of nuclear pre-mRNA by targeting them for decapping, and in processing of pre-tRNAs, pre-rRNAs and U3 snoRNA. The polypeptide is U6 snRNA-associated Sm-like protein LSm6 (snr-6) (Neurospora crassa (strain ATCC 24698 / 74-OR23-1A / CBS 708.71 / DSM 1257 / FGSC 987)).